A 461-amino-acid polypeptide reads, in one-letter code: Steroidogenic factor 1 (461 aa).

The nuclear receptor DNA-binding region spans 10–85 (DELCPVCGDK…VGMRLEAVRA (76 aa)). Residues 13-33 (CPVCGDKVSGYHYGLLTCESC) form an NR C4-type zinc finger. 3 positions are modified to N6-acetyllysine: Lys-34, Lys-38, and Lys-72. The NR C4-type zinc-finger motif lies at 49 to 73 (CTESQSCKIDKTQRKRCPFCRFQKC). A Glycyl lysine isopeptide (Lys-Gly) (interchain with G-Cter in SUMO) cross-link involves residue Lys-119. A disordered region spans residues 119–157 (KLETGPPMGVPPPPPPAPDYVLPPSLHGPEPKGLAAGPP). Residues 126–136 (MGVPPPPPPAP) are compositionally biased toward pro residues. Lys-194 participates in a covalent cross-link: Glycyl lysine isopeptide (Lys-Gly) (interchain with G-Cter in SUMO). A Phosphoserine; by CDK7 modification is found at Ser-203. The 238-residue stretch at 222 to 459 (NVPELILQLL…NLLIEMLQAK (238 aa)) folds into the NR LBD domain. The segment at 230–461 (LLQLEPDEDQ…LIEMLQAKQT (232 aa)) is important for dimerization. A 1,2-diacyl-sn-glycero-3-phosphocholine contacts are provided by Gly-341, Tyr-436, and Lys-440. A 1,2-diacylglycero-3-phosphoethanolamine is bound by residues Gly-341, Tyr-436, and Lys-440.

Belongs to the nuclear hormone receptor family. NR5 subfamily. Binds DNA as a monomer. Interacts with NR0B2 and PPARGC1A. Part of a complex consisting of SFPQ, NONO and NR5A1. Interacts with NCOA2. Interacts with DGKQ and CDK7. Binds to and activated by HIPK3. Acetylation stimulates the transcriptional activity. Post-translationally, sumoylation reduces CDK7-mediated phosphorylation on Ser-203. In terms of processing, phosphorylated on Ser-203 by CDK7. This phosphorylation promotes transcriptional activity. As to expression, high expressed in the adrenal cortex, the ovary, the testis, and the spleen.

It localises to the nucleus. Functionally, transcriptional activator. Essential for sexual differentiation and formation of the primary steroidogenic tissues. Binds to the Ad4 site found in the promoter region of steroidogenic P450 genes such as CYP11A, CYP11B and CYP21B. Also regulates the AMH/Muellerian inhibiting substance gene as well as the AHCH and STAR genes. 5'-YCAAGGYC-3' and 5'-RRAGGTCA-3' are the consensus sequences for the recognition by NR5A1. The SFPQ-NONO-NR5A1 complex binds to the CYP17 promoter and regulates basal and cAMP-dependent transcriptional activity. Binds phosphatidylcholine. Binds phospholipids with a phosphatidylinositol (PI) headgroup, in particular PI(3,4)P2 and PI(3,4,5)P3. Activated by the phosphorylation of NR5A1 by HIPK3 leading to increased steroidogenic gene expression upon cAMP signaling pathway stimulation. The sequence is that of Steroidogenic factor 1 (NR5A1) from Homo sapiens (Human).